Reading from the N-terminus, the 330-residue chain is Ferredoxin--NADP reductase 2 (330 aa).

Glu37, Gln45, Tyr50, Val90, Phe124, Asp286, and Thr327 together coordinate FAD.

The protein belongs to the ferredoxin--NADP reductase type 2 family. In terms of assembly, homodimer. FAD is required as a cofactor.

It catalyses the reaction 2 reduced [2Fe-2S]-[ferredoxin] + NADP(+) + H(+) = 2 oxidized [2Fe-2S]-[ferredoxin] + NADPH. The chain is Ferredoxin--NADP reductase 2 from Shouchella clausii (strain KSM-K16) (Alkalihalobacillus clausii).